The chain runs to 407 residues: Extracellular superoxide dismutase [Cu-Zn] 3 (407 aa).

A signal peptide spans 1 to 19; that stretch reads MRLLSVLVFLISVISIAKA. Residues 20-386 are Extracellular-facing; sequence DYQYAFCKFN…SESYNDNEPG (367 aa). Residues Asn51, Asn205, and Asn224 are each glycosylated (N-linked (GlcNAc...) asparagine). Cu cation contacts are provided by His245 and His247. The N-linked (GlcNAc...) asparagine glycan is linked to Asn256. Position 263 (His263) interacts with Cu cation. The Zn(2+) site is built by His263, His271, His280, and Asp283. His320 is a binding site for Cu cation. 2 N-linked (GlcNAc...) asparagine glycosylation sites follow: Asn321 and Asn364. Residues 387 to 406 form a helical membrane-spanning segment; sequence SSSTVIPFFALIIFSIIFAL. Position 407 (Leu407) is a topological domain, cytoplasmic.

Belongs to the Cu-Zn superoxide dismutase family. Cu cation serves as cofactor. Zn(2+) is required as a cofactor.

The protein resides in the cell membrane. It catalyses the reaction 2 superoxide + 2 H(+) = H2O2 + O2. In terms of biological role, protect the extracellular space from toxic effect of reactive oxygen intermediates by converting superoxyde radicals into hydrogen peroxyde and oxygen. This chain is Extracellular superoxide dismutase [Cu-Zn] 3 (sodC), found in Dictyostelium discoideum (Social amoeba).